The chain runs to 409 residues: Ribose-phosphate pyrophosphokinase 3, chloroplastic (409 aa).

Composition is skewed to low complexity over residues 1-16 (MATAASASASASPAAA) and 34-43 (PASAFARPSP). Residues 1–43 (MATAASASASASPAAAFGAKTRRPGPSPSPSPSPASAFARPSP) are disordered. A chloroplast-targeting transit peptide spans 1 to 44 (MATAASASASASPAAAFGAKTRRPGPSPSPSPSPASAFARPSPR). 2 residues coordinate Mg(2+): aspartate 229 and histidine 231. Residues 312-327 (GRHVVIVDDLVQSGGT) form a binding of phosphoribosylpyrophosphate region.

This sequence belongs to the ribose-phosphate pyrophosphokinase family. The cofactor is Mg(2+).

Its subcellular location is the plastid. It is found in the chloroplast. The enzyme catalyses D-ribose 5-phosphate + ATP = 5-phospho-alpha-D-ribose 1-diphosphate + AMP + H(+). The chain is Ribose-phosphate pyrophosphokinase 3, chloroplastic from Oryza sativa subsp. japonica (Rice).